Consider the following 301-residue polypeptide: Chitosanase (301 aa).

A signal peptide spans 1 to 42 (MHMSNARPSKSRTKFLLAFLCFTLMASLFGATALFGPSKAAA). Glu79 (proton donor) is an active-site residue. Cys92 and Cys166 are oxidised to a cystine. Residue Asp97 is the Nucleophile of the active site.

This sequence belongs to the glycosyl hydrolase 46 family.

The protein resides in the secreted. It catalyses the reaction Endohydrolysis of beta-(1-&gt;4)-linkages between D-glucosamine residues in a partly acetylated chitosan.. Aids in the defense against invading fungal pathogens by degrading their cell wall chitosan. This chain is Chitosanase (csn), found in Niallia circulans (Bacillus circulans).